The primary structure comprises 142 residues: Large ribosomal subunit protein uL13 (142 aa).

The protein belongs to the universal ribosomal protein uL13 family. Part of the 50S ribosomal subunit.

Its function is as follows. This protein is one of the early assembly proteins of the 50S ribosomal subunit, although it is not seen to bind rRNA by itself. It is important during the early stages of 50S assembly. This chain is Large ribosomal subunit protein uL13, found in Alkalilimnicola ehrlichii (strain ATCC BAA-1101 / DSM 17681 / MLHE-1).